A 519-amino-acid chain; its full sequence is Ribonuclease Y 1 (519 aa).

The helical transmembrane segment at 2-22 threads the bilayer; it reads IILYIILAIIAIVVGYCAGFF. The disordered stretch occupies residues 84-113; the sequence is QKQEDRLLQREDSLDRKDNSFEKRENSLER. One can recognise a KH domain in the interval 209–294; that stretch reads TITVVSLPND…EMVEKAKKEM (86 aa). Positions 335 to 428 constitute an HD domain; the sequence is VLNHSIEVAN…VAAANSISAA (94 aa).

This sequence belongs to the RNase Y family.

It localises to the cell membrane. Its function is as follows. Endoribonuclease that initiates mRNA decay. This is Ribonuclease Y 1 from Pediococcus pentosaceus (strain ATCC 25745 / CCUG 21536 / LMG 10740 / 183-1w).